We begin with the raw amino-acid sequence, 385 residues long: Guanine nucleotide-binding protein alpha-5 subunit (385 aa).

The N-myristoyl glycine moiety is linked to residue G2. The S-palmitoyl cysteine moiety is linked to residue C6. The 354-residue stretch at 32 to 385 folds into the G-alpha domain; sequence RKIKMLLLGV…GKNYEDTNLE (354 aa). Positions 35-48 are G1 motif; sequence KMLLLGVTDSGKST. GTP contacts are provided by residues 40-47, 174-180, 199-203, 298-301, and A357; these read GVTDSGKS, IHMRQTT, DVGGQ, and NKKD. Residues S47 and T180 each contribute to the Mg(2+) site. Residues 172-180 are G2 motif; sequence DLIHMRQTT. The G3 motif stretch occupies residues 195–204; it reads IRLIDVGGQK. Positions 294–301 are G4 motif; sequence MLFLNKKD. Residues 355-360 are G5 motif; the sequence is TQATVT.

The protein belongs to the G-alpha family. In terms of assembly, g proteins are composed of 3 units; alpha, beta and gamma. The alpha chain contains the guanine nucleotide binding site.

Guanine nucleotide-binding proteins (G proteins) are involved as modulators or transducers in various transmembrane signaling systems. This is Guanine nucleotide-binding protein alpha-5 subunit (gpa-5) from Caenorhabditis elegans.